The chain runs to 325 residues: Aldo-keto reductase family 1 member D1 (325 aa).

Residues 22 to 26 and aspartate 52 each bind NADP(+); that span reads GLGTY. Tyrosine 26 contacts substrate. The substrate site is built by tyrosine 57, tryptophan 88, glutamate 119, and tyrosine 131. The active-site Proton donor is the tyrosine 57. Residues 168 to 169, glutamine 192, and 218 to 223 each bind NADP(+); these read SN and HSPLGT. Serine 228 carries the post-translational modification Phosphoserine. Substrate is bound at residue tryptophan 229. Residue 272 to 282 coordinates NADP(+); it reads KSFTPERIKEN.

Belongs to the aldo/keto reductase family.

It is found in the cytoplasm. It carries out the reaction 5beta-cholestan-3-one + NADP(+) = cholest-4-en-3-one + NADPH + H(+). The catalysed reaction is 4,5beta-dihydrocortisone + NADP(+) = cortisone + NADPH + H(+). It catalyses the reaction cortisol + NADPH + H(+) = 5beta-dihydrocortisol + NADP(+). The enzyme catalyses corticosterone + NADPH + H(+) = 5beta-dihydrocorticosterone + NADP(+). It carries out the reaction 7alpha,12alpha-dihydroxycholest-4-en-3-one + NADPH + H(+) = 7alpha,12alpha-dihydroxy-5beta-cholestan-3-one + NADP(+). The catalysed reaction is 7alpha-hydroxycholest-4-en-3-one + NADPH + H(+) = 7alpha-hydroxy-5beta-cholestan-3-one + NADP(+). It catalyses the reaction epitestosterone + NADPH + H(+) = 5beta-dihydroepitestosterone + NADP(+). The enzyme catalyses androst-4-ene-3,17-dione + NADPH + H(+) = 5beta-androstane-3,17-dione + NADP(+). It carries out the reaction progesterone + NADPH + H(+) = 5beta-pregnan-3,20-dione + NADP(+). The catalysed reaction is 21-hydroxyprogesterone + NADPH + H(+) = 5beta-dihydrodeoxycorticosterone + NADP(+). It catalyses the reaction aldosterone + NADPH + H(+) = 5beta-dihydroaldosterone + NADP(+). The enzyme catalyses 17beta-hydroxyandrosta-1,4-dien-3-one + NADPH + H(+) = 17beta-hydroxy-5beta-androst-1-en-3-one + NADP(+). It carries out the reaction 17beta-hydroxyestr-4-en-3-one + NADPH + H(+) = 17beta-hydroxy-5beta-estran-3-one + NADP(+). The catalysed reaction is 5beta-dihydrotestosterone + NADP(+) = testosterone + NADPH + H(+). It catalyses the reaction androst-4-ene-3,11,17-trione + NADPH + H(+) = 17beta-hydroxyandrost-4-ene-3,11-dione + NADP(+). Subject to inhibition by high substrate concentrations. Inhibited by testosterone concentrations above 10 uM. Inhibited by the primary and secondary bile acids chenodeoxycholic acid and ursodeoxycholic acid. Catalyzes the stereospecific NADPH-dependent reduction of the C4-C5 double bond of bile acid intermediates and steroid hormones carrying a delta(4)-3-one structure to yield an A/B cis-ring junction. This cis-configuration is crucial for bile acid biosynthesis and plays important roles in steroid metabolism. Capable of reducing a broad range of delta-(4)-3-ketosteroids from C18 (such as, 17beta-hydroxyestr-4-en-3-one) to C27 (such as, 7alpha-hydroxycholest-4-en-3-one). In Mus musculus (Mouse), this protein is Aldo-keto reductase family 1 member D1 (Akr1d1).